The following is a 781-amino-acid chain: Phenylalanine--tRNA ligase beta subunit (781 aa).

The tRNA-binding domain occupies 39–147 (APPFNDVVVA…DDAPVGEDLR (109 aa)). Residues 398–473 (PRREPIELRL…RLFGYDRIPA (76 aa)) form the B5 domain. 4 residues coordinate Mg(2+): D451, D457, E460, and E461. An FDX-ACB domain is found at 687-780 (SRFPQVRRDL…AARRCSATLR (94 aa)).

This sequence belongs to the phenylalanyl-tRNA synthetase beta subunit family. Type 1 subfamily. Tetramer of two alpha and two beta subunits. Requires Mg(2+) as cofactor.

It is found in the cytoplasm. The enzyme catalyses tRNA(Phe) + L-phenylalanine + ATP = L-phenylalanyl-tRNA(Phe) + AMP + diphosphate + H(+). The polypeptide is Phenylalanine--tRNA ligase beta subunit (Thiobacillus denitrificans (strain ATCC 25259 / T1)).